A 167-amino-acid chain; its full sequence is Menaquinol:cytochrome c reductase iron-sulfur subunit (167 aa).

Positions 59–158 constitute a Rieske domain; sequence TKEPQRFDFK…QEVKDGFLYL (100 aa). [2Fe-2S] cluster-binding residues include Cys-100, His-102, Cys-121, and His-124. A disulfide bond links Cys-105 and Cys-123.

The protein belongs to the Rieske iron-sulfur protein family. The main subunits of the menaquinol:cytochrome c complex are a Rieske-type iron-sulfur protein (QcrA), a cytochrome b (QcrB) and a cytochrome c (QcrC). [2Fe-2S] cluster serves as cofactor.

Component of the menaquinol:cytochrome c reductase complex. The Rieske protein is a high potential 2Fe-2S protein. The chain is Menaquinol:cytochrome c reductase iron-sulfur subunit (qcrA) from Bacillus subtilis (strain 168).